The chain runs to 128 residues: Large ribosomal subunit protein bL17 (128 aa).

Belongs to the bacterial ribosomal protein bL17 family. In terms of assembly, part of the 50S ribosomal subunit. Contacts protein L32.

The polypeptide is Large ribosomal subunit protein bL17 (Tolumonas auensis (strain DSM 9187 / NBRC 110442 / TA 4)).